A 67-amino-acid polypeptide reads, in one-letter code: Large ribosomal subunit protein uL29 (67 aa).

Belongs to the universal ribosomal protein uL29 family.

The sequence is that of Large ribosomal subunit protein uL29 (rpmC) from Thermus thermophilus.